Consider the following 305-residue polypeptide: Translation initiation factor eIF2B subunit alpha (305 aa).

This sequence belongs to the eIF-2B alpha/beta/delta subunits family. In terms of assembly, component of the translation initiation factor 2B (eIF2B) complex which is a heterodecamer of two sets of five different subunits: alpha, beta, gamma, delta and epsilon. Subunits alpha, beta and delta comprise a regulatory subcomplex and subunits epsilon and gamma comprise a catalytic subcomplex. Within the complex, the hexameric regulatory complex resides at the center, with the two heterodimeric catalytic subcomplexes bound on opposite sides.

It localises to the cytoplasm. Its subcellular location is the cytosol. Functionally, acts as a component of the translation initiation factor 2B (eIF2B) complex, which catalyzes the exchange of GDP for GTP on eukaryotic initiation factor 2 (eIF2) gamma subunit. Its guanine nucleotide exchange factor activity is repressed when bound to eIF2 complex phosphorylated on the alpha subunit, thereby limiting the amount of methionyl-initiator methionine tRNA available to the ribosome and consequently global translation is repressed. The polypeptide is Translation initiation factor eIF2B subunit alpha (Caenorhabditis elegans).